The chain runs to 92 residues: YcgL domain-containing protein ASA_2166 (92 aa).

A YcgL domain is found at 1–85 (MLCAVYKSRK…PPENLLEQHK (85 aa)).

The polypeptide is YcgL domain-containing protein ASA_2166 (Aeromonas salmonicida (strain A449)).